We begin with the raw amino-acid sequence, 345 residues long: Dihydroorotate dehydrogenase (quinone) (345 aa).

Residues 65–69 (AGLDK) and Thr89 contribute to the FMN site. Lys69 lines the substrate pocket. Substrate is bound at residue 114 to 118 (NRMGF). FMN is bound by residues Asn142 and Asn175. Residue Asn175 coordinates substrate. Ser178 serves as the catalytic Nucleophile. A substrate-binding site is contributed by Asn180. Positions 220 and 248 each coordinate FMN. 249–250 (NT) contributes to the substrate binding site. Residues Gly271, Gly300, and 321 to 322 (YT) each bind FMN.

Belongs to the dihydroorotate dehydrogenase family. Type 2 subfamily. As to quaternary structure, monomer. FMN serves as cofactor.

It is found in the cell membrane. It carries out the reaction (S)-dihydroorotate + a quinone = orotate + a quinol. The protein operates within pyrimidine metabolism; UMP biosynthesis via de novo pathway; orotate from (S)-dihydroorotate (quinone route): step 1/1. Catalyzes the conversion of dihydroorotate to orotate with quinone as electron acceptor. This is Dihydroorotate dehydrogenase (quinone) from Burkholderia cenocepacia (strain HI2424).